The following is a 361-amino-acid chain: Caffeic acid 3-O-methyltransferase 2 (361 aa).

128–134 (MNQDKVL) is a binding site for substrate. Residues 160–178 (AFEYHGTDPRFNKVFNQGM) form a substrate binding region. Residues G206, D229, D249, M250, and K263 each contribute to the S-adenosyl-L-methionine site. H267 functions as the Proton acceptor in the catalytic mechanism.

Belongs to the class I-like SAM-binding methyltransferase superfamily. Cation-independent O-methyltransferase family. COMT subfamily. In terms of assembly, homodimer.

It catalyses the reaction (E)-caffeate + S-adenosyl-L-methionine = (E)-ferulate + S-adenosyl-L-homocysteine + H(+). Its pathway is aromatic compound metabolism; phenylpropanoid biosynthesis. In terms of biological role, catalyzes the conversion of caffeic acid to ferulic acid and of 5-hydroxyferulic acid to sinapic acid. The resulting products may subsequently be converted to the corresponding alcohols that are incorporated into lignins. The sequence is that of Caffeic acid 3-O-methyltransferase 2 (COMT2) from Ocimum basilicum (Sweet basil).